Consider the following 472-residue polypeptide: Glutamate-1-semialdehyde 2,1-aminomutase 2, chloroplastic (472 aa).

Residues 1–36 constitute a chloroplast transit peptide; the sequence is MAATLTGSGIALGFSCSAKFSKRASSSSNRRCIKMS. Position 312 is an N6-(pyridoxal phosphate)lysine (K312).

This sequence belongs to the class-III pyridoxal-phosphate-dependent aminotransferase family. HemL subfamily. In terms of assembly, homodimer. Pyridoxal 5'-phosphate serves as cofactor. As to expression, expressed in leaf primordia and shoot apical meristems (SAM).

It localises to the plastid. The protein localises to the chloroplast. It catalyses the reaction (S)-4-amino-5-oxopentanoate = 5-aminolevulinate. Its pathway is porphyrin-containing compound metabolism; protoporphyrin-IX biosynthesis; 5-aminolevulinate from L-glutamyl-tRNA(Glu): step 2/2. It functions in the pathway porphyrin-containing compound metabolism; chlorophyll biosynthesis. Its function is as follows. Transaminase converting glutamate 1-semialdehyde (GSA) to 5-aminolevulinate (ALA). Involved in the biosynthesis of tetrapyrroles. This is Glutamate-1-semialdehyde 2,1-aminomutase 2, chloroplastic from Arabidopsis thaliana (Mouse-ear cress).